The following is a 413-amino-acid chain: Tyrosine--tRNA ligase (413 aa).

Positions 59 to 68 match the 'HIGH' region motif; that stretch reads PTAPDIHLGH. Positions 243–247 match the 'KMSKS' region motif; sequence KMSKS. An ATP-binding site is contributed by lysine 246. One can recognise an S4 RNA-binding domain in the interval 351–411; sequence LAIGQLLKQA…GKRRFARVTL (61 aa).

The protein belongs to the class-I aminoacyl-tRNA synthetase family. TyrS type 2 subfamily. As to quaternary structure, homodimer.

The protein localises to the cytoplasm. The catalysed reaction is tRNA(Tyr) + L-tyrosine + ATP = L-tyrosyl-tRNA(Tyr) + AMP + diphosphate + H(+). Catalyzes the attachment of tyrosine to tRNA(Tyr) in a two-step reaction: tyrosine is first activated by ATP to form Tyr-AMP and then transferred to the acceptor end of tRNA(Tyr). The protein is Tyrosine--tRNA ligase of Burkholderia mallei (strain ATCC 23344).